Here is a 122-residue protein sequence, read N- to C-terminus: Large ribosomal subunit protein uL14 (122 aa).

It belongs to the universal ribosomal protein uL14 family. In terms of assembly, part of the 50S ribosomal subunit. Forms a cluster with proteins L3 and L19. In the 70S ribosome, L14 and L19 interact and together make contacts with the 16S rRNA in bridges B5 and B8.

Functionally, binds to 23S rRNA. Forms part of two intersubunit bridges in the 70S ribosome. The polypeptide is Large ribosomal subunit protein uL14 (Rickettsia africae (strain ESF-5)).